Reading from the N-terminus, the 617-residue chain is Dihydroxy-acid dehydratase (617 aa).

Aspartate 81 serves as a coordination point for Mg(2+). Residue cysteine 122 coordinates [2Fe-2S] cluster. Residues aspartate 123 and lysine 124 each contribute to the Mg(2+) site. Residue lysine 124 is modified to N6-carboxylysine. Residue cysteine 195 coordinates [2Fe-2S] cluster. Glutamate 492 provides a ligand contact to Mg(2+). Serine 518 functions as the Proton acceptor in the catalytic mechanism.

Belongs to the IlvD/Edd family. As to quaternary structure, homodimer. The cofactor is [2Fe-2S] cluster. Requires Mg(2+) as cofactor.

The catalysed reaction is (2R)-2,3-dihydroxy-3-methylbutanoate = 3-methyl-2-oxobutanoate + H2O. The enzyme catalyses (2R,3R)-2,3-dihydroxy-3-methylpentanoate = (S)-3-methyl-2-oxopentanoate + H2O. Its pathway is amino-acid biosynthesis; L-isoleucine biosynthesis; L-isoleucine from 2-oxobutanoate: step 3/4. The protein operates within amino-acid biosynthesis; L-valine biosynthesis; L-valine from pyruvate: step 3/4. Functionally, functions in the biosynthesis of branched-chain amino acids. Catalyzes the dehydration of (2R,3R)-2,3-dihydroxy-3-methylpentanoate (2,3-dihydroxy-3-methylvalerate) into 2-oxo-3-methylpentanoate (2-oxo-3-methylvalerate) and of (2R)-2,3-dihydroxy-3-methylbutanoate (2,3-dihydroxyisovalerate) into 2-oxo-3-methylbutanoate (2-oxoisovalerate), the penultimate precursor to L-isoleucine and L-valine, respectively. The protein is Dihydroxy-acid dehydratase of Xanthobacter autotrophicus (strain ATCC BAA-1158 / Py2).